The following is a 129-amino-acid chain: Iron-sulfur cluster assembly 1 homolog, mitochondrial (129 aa).

The N-terminal 12 residues, 1–12 (MSASLVRATVRA), are a transit peptide targeting the mitochondrion. Fe cation is bound by residues cysteine 57, cysteine 121, and cysteine 123.

It belongs to the HesB/IscA family. Interacts with CRY2, but not with CRY1 (in vitro).

It is found in the mitochondrion. Involved in the maturation of mitochondrial 4Fe-4S proteins functioning late in the iron-sulfur cluster assembly pathway. Probably involved in the binding of an intermediate of Fe/S cluster assembly. This Bos taurus (Bovine) protein is Iron-sulfur cluster assembly 1 homolog, mitochondrial (ISCA1).